A 24-amino-acid polypeptide reads, in one-letter code: Acidic phospholipase A2 4 (24 aa).

Belongs to the phospholipase A2 family. Group II subfamily. Ca(2+) serves as cofactor. Expressed by the venom gland.

It localises to the secreted. It catalyses the reaction a 1,2-diacyl-sn-glycero-3-phosphocholine + H2O = a 1-acyl-sn-glycero-3-phosphocholine + a fatty acid + H(+). Its function is as follows. PLA2 catalyzes the calcium-dependent hydrolysis of the 2-acyl groups in 3-sn-phosphoglycerides. This chain is Acidic phospholipase A2 4, found in Trimeresurus stejnegeri (Chinese green tree viper).